The chain runs to 417 residues: NADH-quinone oxidoreductase subunit D (417 aa).

It belongs to the complex I 49 kDa subunit family. NDH-1 is composed of 14 different subunits. Subunits NuoB, C, D, E, F, and G constitute the peripheral sector of the complex.

It localises to the cell inner membrane. It carries out the reaction a quinone + NADH + 5 H(+)(in) = a quinol + NAD(+) + 4 H(+)(out). In terms of biological role, NDH-1 shuttles electrons from NADH, via FMN and iron-sulfur (Fe-S) centers, to quinones in the respiratory chain. The immediate electron acceptor for the enzyme in this species is believed to be ubiquinone. Couples the redox reaction to proton translocation (for every two electrons transferred, four hydrogen ions are translocated across the cytoplasmic membrane), and thus conserves the redox energy in a proton gradient. This Paraburkholderia xenovorans (strain LB400) protein is NADH-quinone oxidoreductase subunit D.